Reading from the N-terminus, the 281-residue chain is Acidic leucine-rich nuclear phosphoprotein 32-related protein (281 aa).

LRR repeat units lie at residues 29–52 (YESL…EKEL), 56–78 (FKNL…IPSI), 79–103 (ATLN…IVQN), and 105–128 (PNIK…TLKE). In terms of domain architecture, LRRCT spans 140-178 (NPFADNPNYRKELFEFLPNVKIIDCYNKEGMEVLSSDEE). Residues 197-244 (FKDEDDEDEEFVPNDNEDDDEDDELDDDLEDEDMEDLDKEDLDKEDYD) show a composition bias toward acidic residues. The tract at residues 197 to 281 (FKDEDDEDEE…DMDLKKTKLE (85 aa)) is disordered. Over residues 245–266 (IDTKETEGVNKDEKSNKRKQDA) the composition is skewed to basic and acidic residues.

This sequence belongs to the ANP32 family.

In Plasmodium falciparum (isolate 3D7), this protein is Acidic leucine-rich nuclear phosphoprotein 32-related protein.